A 25-amino-acid polypeptide reads, in one-letter code: Small ribosomal subunit protein eS32A (25 aa).

Residues 1–25 are disordered; it reads MRDKWRKKRVRRLKRKRRKMRARSK.

The protein belongs to the eukaryotic ribosomal protein eS32 family. As to quaternary structure, component of the large ribosomal subunit (LSU). Mature yeast ribosomes consist of a small (40S) and a large (60S) subunit. The 40S small subunit contains 1 molecule of ribosomal RNA (18S rRNA) and at least 33 different proteins. The large 60S subunit contains 3 rRNA molecules (25S, 5.8S and 5S rRNA) and at least 46 different proteins.

It is found in the cytoplasm. The protein resides in the nucleus. In terms of biological role, component of the ribosome, a large ribonucleoprotein complex responsible for the synthesis of proteins in the cell. The small ribosomal subunit (SSU) binds messenger RNAs (mRNAs) and translates the encoded message by selecting cognate aminoacyl-transfer RNA (tRNA) molecules. The large subunit (LSU) contains the ribosomal catalytic site termed the peptidyl transferase center (PTC), which catalyzes the formation of peptide bonds, thereby polymerizing the amino acids delivered by tRNAs into a polypeptide chain. The nascent polypeptides leave the ribosome through a tunnel in the LSU and interact with protein factors that function in enzymatic processing, targeting, and the membrane insertion of nascent chains at the exit of the ribosomal tunnel. The protein is Small ribosomal subunit protein eS32A (rpl4101) of Schizosaccharomyces pombe (strain 972 / ATCC 24843) (Fission yeast).